The sequence spans 851 residues: Glycogen phosphorylase, liver form (851 aa).

Ala2 is subject to N-acetylalanine. Residue Ser15 is modified to Phosphoserine; by PHK; in form phosphorylase a. Residues 43–45 (DRN), Tyr76, and Arg310 contribute to the AMP site. N6-succinyllysine is present on Lys364. An N6-acetyllysine modification is found at Lys470. Ser524, Ser561, and Ser639 each carry phosphoserine. Lys681 is subject to N6-(pyridoxal phosphate)lysine. Residue Lys796 is modified to N6-acetyllysine.

The protein belongs to the glycogen phosphorylase family. In terms of assembly, homodimer; enzymatically active. Interacts with PPP1R3B; recruits the phosphatase PP1 which dephosphorylates and inactivates PYGL/glycogen phosphorylase. The cofactor is pyridoxal 5'-phosphate. Acetylation, which is up-regulated by glucose and insulin and down-regulated by glucagon, inhibits the glycogen phosphorylase activity by promoting PPP1R3B-mediated recruitment of phosphatase PP1 and Ser-15 dephosphorylation. Post-translationally, phosphorylation at Ser-15 converts inactive phosphorylase b into active phosphorylase a. Dephosphorylation of Ser-15 by phosphatase PP1 inactivates the enzyme.

The protein localises to the cytoplasm. The protein resides in the cytosol. The enzyme catalyses [(1-&gt;4)-alpha-D-glucosyl](n) + phosphate = [(1-&gt;4)-alpha-D-glucosyl](n-1) + alpha-D-glucose 1-phosphate. Its activity is regulated as follows. Allosterically regulated through the non-covalent binding of metabolites, being activated by AMP and inhibited by ATP, ADP, and glucose-6-phosphate. The activity is also controlled by post-translational modifications including phosphorylation and acetylation. Allosteric enzyme that catalyzes the rate-limiting step in glycogen catabolism, the phosphorolytic cleavage of glycogen to produce glucose-1-phosphate, and plays a central role in maintaining cellular and organismal glucose homeostasis. The polypeptide is Glycogen phosphorylase, liver form (Bos taurus (Bovine)).